Here is a 157-residue protein sequence, read N- to C-terminus: Regulator of Ty1 transposition protein 102 (157 aa).

At Ser-77 the chain carries Phosphoserine. A disordered region spans residues 95–157; that stretch reads SLMTSHTKGD…TKESKDVKMN (63 aa). Positions 96-116 are enriched in polar residues; the sequence is LMTSHTKGDTSKATGAPSANQ. At Ser-122 the chain carries Phosphoserine. Residues 147 to 157 are compositionally biased toward basic and acidic residues; that stretch reads NTKESKDVKMN.

As to quaternary structure, interacts with STH1 and SWI3. Component of the two forms of the RSC complex composed of at least either RSC1 or RSC2, and ARP7, ARP9, LDB7, NPL6, RSC3, RSC30, RSC4, RSC58, RSC6, RSC8, RSC9, SFH1, STH1, HTL1 and probably RTT102. The complexes interact with histone and histone variant components of centromeric chromatin. Probable additional component of the SWI/SNF global transcription activator complex. The 1.14 MDa SWI/SNF complex is composed of 11 different subunits: one copy each of SWI1, SNF2/SWI2, SNF5, SNF12/SWP73, ARP7/SWP61, ARP9/SWP59; two copies each of SWI3, SNF6, SNF11, SWP82; and three copies of TAF14/SWP29.

Its subcellular location is the nucleus. In terms of biological role, probable component of the chromatin structure-remodeling complex (RSC) which is involved in transcription regulation and nucleosome positioning. RSC is responsible for the transfer of a histone octamer from a nucleosome core particle to naked DNA. The reaction requires ATP and involves an activated RSC-nucleosome intermediate. Remodeling reaction also involves DNA translocation, DNA twist and conformational change. As a reconfigurer of centromeric and flanking nucleosomes, RSC complex is required both for proper kinetochore function in chromosome segregation and, via a PKC1-dependent signaling pathway, for organization of the cellular cytoskeleton. Probable component of the SWI/SNF complex, an ATP-dependent chromatin-remodeling complex, is required for the positive and negative regulation of gene expression of a large number of genes. It changes chromatin structure by altering DNA-histone contacts within a nucleosome, leading eventually to a change in nucleosome position, thus facilitating or repressing binding of gene-specific transcription factors. This Saccharomyces cerevisiae (strain ATCC 204508 / S288c) (Baker's yeast) protein is Regulator of Ty1 transposition protein 102 (RTT102).